The following is a 640-amino-acid chain: Threonine--tRNA ligase (640 aa).

The 61-residue stretch at 1-61 (MPVVTLPDGS…DKDSHLAIIT (61 aa)) folds into the TGS domain. Residues 242-533 (DHRRLGKQLD…LIENHAGNMP (292 aa)) form a catalytic region. 3 residues coordinate Zn(2+): Cys333, His384, and His510.

The protein belongs to the class-II aminoacyl-tRNA synthetase family. As to quaternary structure, homodimer. Zn(2+) is required as a cofactor.

It is found in the cytoplasm. The enzyme catalyses tRNA(Thr) + L-threonine + ATP = L-threonyl-tRNA(Thr) + AMP + diphosphate + H(+). In terms of biological role, catalyzes the attachment of threonine to tRNA(Thr) in a two-step reaction: L-threonine is first activated by ATP to form Thr-AMP and then transferred to the acceptor end of tRNA(Thr). Also edits incorrectly charged L-seryl-tRNA(Thr). This chain is Threonine--tRNA ligase, found in Polynucleobacter asymbioticus (strain DSM 18221 / CIP 109841 / QLW-P1DMWA-1) (Polynucleobacter necessarius subsp. asymbioticus).